The primary structure comprises 368 residues: MMGRNDDAFHPLLHSTPESSVKIPVPLVSVGRESSQSKGNMKTAILIWLTLQNSIHTLLIRYSRAREVDAMFVSTVAVWLTEVIKCFICLFLVAQEETPRRFIHALRTQILEQPYDTLKVCIPAMIYIVQNNLFYVAASHLDAATFMITSQLKIFTAAIFTVIILRRSLNRTQWFALAVLFVGVSLVQLQGTKAKESSGESPFVGFVAVVVACCLSGFAGIYFEKILKGSAPVSLWMRNVQMAVFSIPASFSAIYMQDSKTVNEYGLLYGFDSIVWLTVLWYGVGGLSVAVCIKYADNIAKNFATSVAIILSTIGSIFLFDFIPSFTFLLGASLVIFSIFLYSSHQSMVAALGRLRGEIPSTKEAFCL.

8 helical membrane passes run 72 to 92, 118 to 138, 145 to 165, 174 to 194, 203 to 223, 235 to 254, 273 to 293, and 317 to 337; these read FVST…CLFL, LKVC…YVAA, TFMI…VIIL, WFAL…GTKA, FVGF…GIYF, LWMR…FSAI, SIVW…AVCI, and IFLF…LVIF.

Belongs to the nucleotide-sugar transporter family. SLC35A subfamily. As to expression, expressed exclusively in pharyngeal cells g1 and g2, lateral seam cells, spermatheca and vas deferens.

It is found in the golgi apparatus membrane. In terms of biological role, acts as a transporter of both UDP-galactose and UDP-N-acetylglucosamine into the Golgi lumen. Apparently transports UDP-galactose and UDP-N-acetylglucosamine simultaneously, and independently, by an unknown mechanism. Functions redundantly with nucleotide sugar transporter nstp-4. May be involved in gonadal development. The polypeptide is UDP-galactose/UDP-N-acetylglucosamine transporter srf-3 (srf-3) (Caenorhabditis elegans).